A 549-amino-acid polypeptide reads, in one-letter code: Glucose-6-phosphate isomerase (549 aa).

3 positions are modified to N6-acetyllysine: lysine 80, lysine 228, and lysine 234. Glutamate 355 acts as the Proton donor in catalysis. Active-site residues include histidine 386 and lysine 514.

Belongs to the GPI family.

It localises to the cytoplasm. The catalysed reaction is alpha-D-glucose 6-phosphate = beta-D-fructose 6-phosphate. It participates in carbohydrate biosynthesis; gluconeogenesis. The protein operates within carbohydrate degradation; glycolysis; D-glyceraldehyde 3-phosphate and glycerone phosphate from D-glucose: step 2/4. Functionally, catalyzes the reversible isomerization of glucose-6-phosphate to fructose-6-phosphate. In Shigella flexneri serotype 5b (strain 8401), this protein is Glucose-6-phosphate isomerase.